Here is a 726-residue protein sequence, read N- to C-terminus: MSTTDDTHNTLSAGKCPFHQGGHDRSAGAGTASRDWWPNQLRVDLLNQHSNRSNPLGEDFDYRKEFSKLDYSALKGDLKALLTDSQPWWPADWGSYVGLFIRMAWHGAGTYRSIDGRGGAGRGQQRFAPLNSWPDNVSLDKARRLLWPIKQKYGQKISWADLFILAGNVALENSGFRTFGFGAGREDVWEPDLDVNWGDEKAWLTHRHPEALAKAPLGATEMGLIYVNPEGPDHSGEPLSAAAAIRATFGNMGMNDEETVALIAGGHTLGKTHGAAAASHVGADPEAAPIEAQGLGWASSYGSGVGADAITSGLEVVWTQTPTQWSNYFFENLFKYEWVQTRSPAGAIQFEAVDAPDIIPDPFDPSKKRKPTMLVTDLTLRFDPEFEKISRRFLNDPQAFNEAFARAWFKLTHRDMGPKARYIGPEVPKEDLIWQDPLPQPLYQPTQEDIINLKAAIAASGLSVSEMVSVAWASASTFRGGDKRGGANGARLALAPQRDWDVNAVAARVLPVLEALQKTTNKASLADIIVLAGVVGIEQAAAAAGVSISVPFAPGRVDARQDQTDIEMFSLLEPIADGFRNYRARLDVSTTESLLIDKAQQLTLTAPEMTVLVGGMRVLGTNFDGSQNGVFTDRPGVLSTDFFANLLDMRYEWKPTDDANELFEGRDRLTGEVKYTATRADLVFGSNSVLRALAEVYACSDAHEKFVKDFVAAWVKVMNLDRFDLL.

The disordered stretch occupies residues 1–33; that stretch reads MSTTDDTHNTLSAGKCPFHQGGHDRSAGAGTAS. Positions 105–226 form a cross-link, tryptophyl-tyrosyl-methioninium (Trp-Tyr) (with M-252); that stretch reads WHGAGTYRSI…LGATEMGLIY (122 aa). Catalysis depends on histidine 106, which acts as the Proton acceptor. A cross-link (tryptophyl-tyrosyl-methioninium (Tyr-Met) (with W-105)) is located at residues 226–252; the sequence is YVNPEGPDHSGEPLSAAAAIRATFGNM. Histidine 267 contacts heme b.

It belongs to the peroxidase family. Peroxidase/catalase subfamily. As to quaternary structure, homodimer or homotetramer. Requires heme b as cofactor. Formation of the three residue Trp-Tyr-Met cross-link is important for the catalase, but not the peroxidase activity of the enzyme.

It carries out the reaction H2O2 + AH2 = A + 2 H2O. It catalyses the reaction 2 H2O2 = O2 + 2 H2O. In terms of biological role, bifunctional enzyme with both catalase and broad-spectrum peroxidase activity. The protein is Catalase-peroxidase of Salmonella arizonae (strain ATCC BAA-731 / CDC346-86 / RSK2980).